A 274-amino-acid polypeptide reads, in one-letter code: Rhamnulose-1-phosphate aldolase (274 aa).

The active site involves glutamate 117. The Zn(2+) site is built by histidine 141, histidine 143, and histidine 212.

The protein belongs to the aldolase class II family. RhaD subfamily. As to quaternary structure, homotetramer. It depends on Zn(2+) as a cofactor.

Its subcellular location is the cytoplasm. The catalysed reaction is L-rhamnulose 1-phosphate = (S)-lactaldehyde + dihydroxyacetone phosphate. Its pathway is carbohydrate degradation; L-rhamnose degradation; glycerone phosphate from L-rhamnose: step 3/3. Its function is as follows. Catalyzes the reversible cleavage of L-rhamnulose-1-phosphate to dihydroxyacetone phosphate (DHAP) and L-lactaldehyde. This Shigella dysenteriae serotype 1 (strain Sd197) protein is Rhamnulose-1-phosphate aldolase.